The chain runs to 592 residues: Ferric-chelate reductase 1 (592 aa).

The chain crosses the membrane as a helical span at residues A2–A22. The Reelin domain maps to I13–P179. Residues N85, N308, N321, and N353 are each glycosylated (N-linked (GlcNAc...) asparagine). The DOMON domain maps to E216–G331. One can recognise a Cytochrome b561 domain in the interval D335 to H534. Residues A372–A392 form a helical membrane-spanning segment. Heme b is bound by residues H373 and H414. 5 helical membrane-spanning segments follow: residues R415–Y435, H446–F466, V477–L499, Y515–A535, and V569–I589. Positions 446 and 482 each coordinate heme b.

This sequence belongs to the FRRS1 family. Requires heme b as cofactor. In terms of tissue distribution, expressed in spleen, liver and kidney with low expression in brain. Localizes in adult brain to the choroid plexus of the fourth, third, and lateral ventricles and to ependymal cells that line the ventricles.

Its subcellular location is the membrane. Its function is as follows. Ferric-chelate reductases reduce Fe(3+) to Fe(2+) before its transport from the endosome to the cytoplasm. The sequence is that of Ferric-chelate reductase 1 (FRRS1) from Mus musculus (Mouse).